We begin with the raw amino-acid sequence, 875 residues long: Phosphoenolpyruvate carboxylase (875 aa).

Active-site residues include H137 and K542.

Belongs to the PEPCase type 1 family. It depends on Mg(2+) as a cofactor.

The catalysed reaction is oxaloacetate + phosphate = phosphoenolpyruvate + hydrogencarbonate. Functionally, forms oxaloacetate, a four-carbon dicarboxylic acid source for the tricarboxylic acid cycle. The chain is Phosphoenolpyruvate carboxylase from Pseudomonas putida (strain ATCC 700007 / DSM 6899 / JCM 31910 / BCRC 17059 / LMG 24140 / F1).